The primary structure comprises 89 residues: Small ribosomal subunit protein uS17 (89 aa).

It belongs to the universal ribosomal protein uS17 family. Part of the 30S ribosomal subunit.

One of the primary rRNA binding proteins, it binds specifically to the 5'-end of 16S ribosomal RNA. The protein is Small ribosomal subunit protein uS17 of Xylella fastidiosa (strain M12).